The primary structure comprises 446 residues: MKNHVQTHNKSLDEINNTVSINTHGKFSQKLFSFLGPGLLVAVGYMDPGNWITSMQGGAQFGYILLFVILLSSLSAMLLQSMTIRLGISTGMDLAQATKHYLNKPVAFVFWIIAELAIIATDIAEVIGSAIALDLLFGIPLLVGALITVFDVFLLLFIMRFGFRKIEAIVGTLIFTVLVIFVFEVFIASPHVTEVLNGFVPSSTIITDNGALFIALGIIGATIMPHNLYLHSSIVQSRMYDRNSIQSKAHAIKYATMDSNIQLSIAFIVNCLLLVLGAALFFGVNTEQLGGFYDLYNALQNQPLLGASLGAIMSTLFAIALLASGQNSTITGTMAGQIVMEGFINLKIPNWLRRLITRLIAILPIIICLIVFNSNEAKMEQLLVFSQVFLSLALPFSLIPLQLSTNDKRLMGQFKNKLWVNIISWCLIIILSILNIYLIIQTFQEL.

11 helical membrane passes run Phe32 to Ile52, Ala59 to Leu79, Ala107 to Ile127, Ile139 to Met159, Ala168 to Ala188, Gly210 to Leu230, Ser264 to Val284, Pro303 to Ala323, Leu355 to Asn375, Gln381 to Leu401, and Val420 to Ile440.

The protein belongs to the NRAMP family.

The protein resides in the cell membrane. Functionally, h(+)-stimulated, divalent metal cation uptake system. The sequence is that of Divalent metal cation transporter MntH from Staphylococcus saprophyticus subsp. saprophyticus (strain ATCC 15305 / DSM 20229 / NCIMB 8711 / NCTC 7292 / S-41).